The chain runs to 77 residues: NAD(P)H-quinone oxidoreductase subunit L (77 aa).

The next 2 helical transmembrane spans lie at 12–32 (LIAY…LLFY) and 47–67 (LGIY…SPFL).

Belongs to the complex I NdhL subunit family. In terms of assembly, NDH-1 can be composed of about 15 different subunits; different subcomplexes with different compositions have been identified which probably have different functions.

Its subcellular location is the cellular thylakoid membrane. It carries out the reaction a plastoquinone + NADH + (n+1) H(+)(in) = a plastoquinol + NAD(+) + n H(+)(out). The enzyme catalyses a plastoquinone + NADPH + (n+1) H(+)(in) = a plastoquinol + NADP(+) + n H(+)(out). NDH-1 shuttles electrons from an unknown electron donor, via FMN and iron-sulfur (Fe-S) centers, to quinones in the respiratory and/or the photosynthetic chain. The immediate electron acceptor for the enzyme in this species is believed to be plastoquinone. Couples the redox reaction to proton translocation, and thus conserves the redox energy in a proton gradient. Cyanobacterial NDH-1 also plays a role in inorganic carbon-concentration. This is NAD(P)H-quinone oxidoreductase subunit L from Prochlorococcus marinus (strain AS9601).